A 259-amino-acid chain; its full sequence is Phosphate import ATP-binding protein PstB 1 (259 aa).

Positions 13-254 (IETKDVDLFY…PAEKETEDYI (242 aa)) constitute an ABC transporter domain. 45-52 (GPSGCGKS) provides a ligand contact to ATP.

This sequence belongs to the ABC transporter superfamily. Phosphate importer (TC 3.A.1.7) family. The complex is composed of two ATP-binding proteins (PstB), two transmembrane proteins (PstC and PstA) and a solute-binding protein (PstS).

The protein localises to the cell membrane. It carries out the reaction phosphate(out) + ATP + H2O = ADP + 2 phosphate(in) + H(+). In terms of biological role, part of the ABC transporter complex PstSACB involved in phosphate import. Responsible for energy coupling to the transport system. This chain is Phosphate import ATP-binding protein PstB 1, found in Listeria innocua serovar 6a (strain ATCC BAA-680 / CLIP 11262).